Here is a 346-residue protein sequence, read N- to C-terminus: Arsenite methyltransferase (346 aa).

Belongs to the methyltransferase superfamily. Arsenite methyltransferase family.

The enzyme catalyses arsenic triglutathione + [thioredoxin]-dithiol + S-adenosyl-L-methionine + 2 H2O = methylarsonous acid + [thioredoxin]-disulfide + 3 glutathione + S-adenosyl-L-homocysteine + H(+). It carries out the reaction arsenic triglutathione + 2 [thioredoxin]-dithiol + 2 S-adenosyl-L-methionine + H2O = dimethylarsinous acid + 2 [thioredoxin]-disulfide + 3 glutathione + 2 S-adenosyl-L-homocysteine + 2 H(+). It catalyses the reaction arsenic triglutathione + 3 [thioredoxin]-dithiol + 3 S-adenosyl-L-methionine = trimethylarsine + 3 [thioredoxin]-disulfide + 3 glutathione + 3 S-adenosyl-L-homocysteine + 3 H(+). Functionally, catalyzes the transfer of a methyl group from AdoMet to arsenite, producing methylated arsenicals. Involved in the conversion of As(III) to dimethylarsenate as the main product in the medium and also produces dimethylarsine and trimethylarsine gases. Reduces the arsenic toxicity in the cell and may contribute to the global arsenic cycling. The polypeptide is Arsenite methyltransferase (Aquipseudomonas alcaligenes (strain ATCC 14909 / DSM 50342 / CCUG 1425 / JCM 20561 / NBRC 14159 / NCIMB 9945 / NCTC 10367 / 1577) (Pseudomonas alcaligenes)).